The following is a 317-amino-acid chain: Pseudouridine-5'-phosphate glycosidase 1 (317 aa).

Glu-40 serves as the catalytic Proton donor. The substrate site is built by Lys-101 and Val-121. Residue Asp-153 participates in Mn(2+) binding. 155 to 157 serves as a coordination point for substrate; the sequence is SAD. Residue Lys-174 is the Nucleophile of the active site.

Belongs to the pseudouridine-5'-phosphate glycosidase family. As to quaternary structure, homotrimer. Mn(2+) is required as a cofactor.

It catalyses the reaction D-ribose 5-phosphate + uracil = psi-UMP + H2O. Functionally, catalyzes the reversible cleavage of pseudouridine 5'-phosphate (PsiMP) to ribose 5-phosphate and uracil. Functions biologically in the cleavage direction, as part of a pseudouridine degradation pathway. The chain is Pseudouridine-5'-phosphate glycosidase 1 from Rhizobium johnstonii (strain DSM 114642 / LMG 32736 / 3841) (Rhizobium leguminosarum bv. viciae).